The chain runs to 305 residues: Probable GTP 3',8-cyclase (305 aa).

Residues 6 to 233 (RHGRPVMSLR…MQDRKKYYID (228 aa)) enclose the Radical SAM core domain. GTP is bound at residue arginine 15. [4Fe-4S] cluster is bound by residues cysteine 22 and cysteine 26. Tyrosine 28 lines the S-adenosyl-L-methionine pocket. A [4Fe-4S] cluster-binding site is contributed by cysteine 29. Residue arginine 62 coordinates GTP. An S-adenosyl-L-methionine-binding site is contributed by glycine 66. Threonine 92 is a binding site for GTP. Serine 116 contacts S-adenosyl-L-methionine. Lysine 153 contributes to the GTP binding site. [4Fe-4S] cluster contacts are provided by cysteine 249 and cysteine 252. GTP is bound at residue 254–256 (RLR). [4Fe-4S] cluster is bound at residue cysteine 266.

It belongs to the radical SAM superfamily. MoaA family. Requires [4Fe-4S] cluster as cofactor.

It catalyses the reaction GTP + AH2 + S-adenosyl-L-methionine = (8S)-3',8-cyclo-7,8-dihydroguanosine 5'-triphosphate + 5'-deoxyadenosine + L-methionine + A + H(+). The protein operates within cofactor biosynthesis; molybdopterin biosynthesis. In terms of biological role, catalyzes the cyclization of GTP to (8S)-3',8-cyclo-7,8-dihydroguanosine 5'-triphosphate. The chain is Probable GTP 3',8-cyclase from Methanothermobacter thermautotrophicus (strain ATCC 29096 / DSM 1053 / JCM 10044 / NBRC 100330 / Delta H) (Methanobacterium thermoautotrophicum).